A 175-amino-acid polypeptide reads, in one-letter code: Ribosome maturation factor RimM (175 aa).

The PRC barrel domain maps to P96–L172.

It belongs to the RimM family. Binds ribosomal protein uS19.

The protein resides in the cytoplasm. In terms of biological role, an accessory protein needed during the final step in the assembly of 30S ribosomal subunit, possibly for assembly of the head region. Essential for efficient processing of 16S rRNA. May be needed both before and after RbfA during the maturation of 16S rRNA. It has affinity for free ribosomal 30S subunits but not for 70S ribosomes. The polypeptide is Ribosome maturation factor RimM (Mycolicibacterium paratuberculosis (strain ATCC BAA-968 / K-10) (Mycobacterium paratuberculosis)).